A 161-amino-acid chain; its full sequence is Bifurcating [FeFe] hydrogenase gamma subunit (161 aa).

[2Fe-2S] cluster contacts are provided by cysteine 78, cysteine 83, cysteine 119, and cysteine 123.

It belongs to the complex I 24 kDa subunit family. Heterotrimer composed of HydA (alpha subunit), HydB (beta subunit) and HydC (gamma subunit). Near neutral and acidic pH conditions favor oligomerization of the heterotrimeric holoenzyme. [2Fe-2S] cluster is required as a cofactor.

The protein localises to the cytoplasm. The enzyme catalyses 2 H2 + 2 oxidized [2Fe-2S]-[ferredoxin] + NAD(+) = 2 reduced [2Fe-2S]-[ferredoxin] + NADH + 3 H(+). Functionally, catalyzes the oxidation of the physiological electron carriers NADH and reduced ferredoxin, coupled to the production of H(2). Acts as a bifurcating [FeFe] hydrogenase, which uses the exergonic oxidation of reduced ferredoxin to drive the unfavorable oxidation of NADH to produce H(2). The gamma subunit might be the site where reduced ferredoxin is oxidized. This chain is Bifurcating [FeFe] hydrogenase gamma subunit, found in Thermotoga maritima (strain ATCC 43589 / DSM 3109 / JCM 10099 / NBRC 100826 / MSB8).